A 562-amino-acid chain; its full sequence is NAD-dependent malic enzyme (562 aa).

Tyr101 (proton donor) is an active-site residue. Residue Arg154 participates in NAD(+) binding. The Proton acceptor role is filled by Lys172. Residues Glu243, Asp244, and Asp267 each coordinate a divalent metal cation. Positions 267 and 415 each coordinate NAD(+).

It belongs to the malic enzymes family. Homotetramer. Mg(2+) is required as a cofactor. It depends on Mn(2+) as a cofactor.

The catalysed reaction is (S)-malate + NAD(+) = pyruvate + CO2 + NADH. The enzyme catalyses oxaloacetate + H(+) = pyruvate + CO2. This chain is NAD-dependent malic enzyme, found in Colwellia psychrerythraea (strain 34H / ATCC BAA-681) (Vibrio psychroerythus).